The sequence spans 140 residues: Nucleoside diphosphate kinase (140 aa).

ATP contacts are provided by K11, F59, R87, T93, R104, and N114. The Pros-phosphohistidine intermediate role is filled by H117.

It belongs to the NDK family. In terms of assembly, homotetramer. Mg(2+) serves as cofactor.

The protein resides in the cytoplasm. It catalyses the reaction a 2'-deoxyribonucleoside 5'-diphosphate + ATP = a 2'-deoxyribonucleoside 5'-triphosphate + ADP. It carries out the reaction a ribonucleoside 5'-diphosphate + ATP = a ribonucleoside 5'-triphosphate + ADP. In terms of biological role, major role in the synthesis of nucleoside triphosphates other than ATP. The ATP gamma phosphate is transferred to the NDP beta phosphate via a ping-pong mechanism, using a phosphorylated active-site intermediate. This chain is Nucleoside diphosphate kinase, found in Bartonella tribocorum (strain CIP 105476 / IBS 506).